Consider the following 374-residue polypeptide: Probable tuliposide A-converting enzyme b6, amyloplastic (374 aa).

The transit peptide at 1–68 directs the protein to the amyloplast; it reads MSVALFCGPP…TNSSLSPSPT (68 aa). Residue Ser226 is the Acyl-ester intermediate of the active site. Active-site charge relay system residues include Asp316 and His348.

Belongs to the AB hydrolase superfamily. As to quaternary structure, homodimer.

It is found in the plastid. Its subcellular location is the amyloplast. The catalysed reaction is 6-tuliposide A = tulipalin A + D-glucose. Lactone-forming carboxylesterases, specifically catalyzing intramolecular transesterification, but not hydrolysis. Involved in the biosynthesis of tulipalins, defensive chemicals that show antimicrobial activities against a broad range of strains of bacteria and fungi. Substrates are 6-tuliposide A &gt; 6-tuliposide B. This is Probable tuliposide A-converting enzyme b6, amyloplastic (TCEA-B6) from Tulipa gesneriana (Garden tulip).